The following is a 266-amino-acid chain: Translation initiation factor 2 subunit alpha (266 aa).

An S1 motif domain is found at 12 to 83 (GDIVIGTVKD…RKGHIDLSLK (72 aa)).

It belongs to the eIF-2-alpha family. Heterotrimer composed of an alpha, a beta and a gamma chain.

EIF-2 functions in the early steps of protein synthesis by forming a ternary complex with GTP and initiator tRNA. The protein is Translation initiation factor 2 subunit alpha (eif2a) of Methanocaldococcus jannaschii (strain ATCC 43067 / DSM 2661 / JAL-1 / JCM 10045 / NBRC 100440) (Methanococcus jannaschii).